The primary structure comprises 103 residues: Histone H4 (103 aa).

Residues 1-14 (MTGRGKGGKGLGKG) show a composition bias toward gly residues. The disordered stretch occupies residues 1–20 (MTGRGKGGKGLGKGGAKRHR). An N6-acetyl-N6-methyllysine; alternate modification is found at lysine 6. Residues lysine 6, lysine 9, and lysine 13 each carry the N6-methyllysine; alternate modification. Lysine 13 carries the N6-acetyl-N6-methyllysine; alternate modification. Residues 17 to 21 (KRHRK) mediate DNA binding. Lysine 92 is subject to N6-glutaryllysine.

This sequence belongs to the histone H4 family. As to quaternary structure, the nucleosome is a histone octamer containing two molecules each of H2A, H2B, H3 and H4 assembled in one H3-H4 heterotetramer and two H2A-H2B heterodimers. The octamer wraps approximately 147 bp of DNA. Glutarylation at Lys-92 (H4K91glu) destabilizes nucleosomes by promoting dissociation of the H2A-H2B dimers from nucleosomes.

The protein localises to the nucleus. It localises to the chromosome. Its function is as follows. Core component of nucleosome. Nucleosomes wrap and compact DNA into chromatin, limiting DNA accessibility to the cellular machineries which require DNA as a template. Histones thereby play a central role in transcription regulation, DNA repair, DNA replication and chromosomal stability. DNA accessibility is regulated via a complex set of post-translational modifications of histones, also called histone code, and nucleosome remodeling. The polypeptide is Histone H4 (hH4-1) (Neurospora crassa (strain ATCC 24698 / 74-OR23-1A / CBS 708.71 / DSM 1257 / FGSC 987)).